The chain runs to 109 residues: Large ribosomal subunit protein uL24 (109 aa).

Belongs to the universal ribosomal protein uL24 family. As to quaternary structure, part of the 50S ribosomal subunit.

Functionally, one of two assembly initiator proteins, it binds directly to the 5'-end of the 23S rRNA, where it nucleates assembly of the 50S subunit. One of the proteins that surrounds the polypeptide exit tunnel on the outside of the subunit. The polypeptide is Large ribosomal subunit protein uL24 (Legionella pneumophila (strain Corby)).